We begin with the raw amino-acid sequence, 397 residues long: Tryptophan synthase beta chain (397 aa).

At Lys-87 the chain carries N6-(pyridoxal phosphate)lysine.

Belongs to the TrpB family. As to quaternary structure, tetramer of two alpha and two beta chains. Pyridoxal 5'-phosphate is required as a cofactor.

It catalyses the reaction (1S,2R)-1-C-(indol-3-yl)glycerol 3-phosphate + L-serine = D-glyceraldehyde 3-phosphate + L-tryptophan + H2O. It participates in amino-acid biosynthesis; L-tryptophan biosynthesis; L-tryptophan from chorismate: step 5/5. Functionally, the beta subunit is responsible for the synthesis of L-tryptophan from indole and L-serine. The sequence is that of Tryptophan synthase beta chain from Klebsiella pneumoniae (strain 342).